A 45-amino-acid polypeptide reads, in one-letter code: U1-ctenitoxin-Pk1a (45 aa).

Disulfide bonds link Cys3-Cys16, Cys10-Cys25, Cys15-Cys34, and Cys27-Cys32.

In terms of tissue distribution, expressed by the venom gland.

Its subcellular location is the secreted. In terms of biological role, neurotoxin. Causes rapid general flaccid paralysis and death in mice at dose levels of 5 ug per mouse. The sequence is that of U1-ctenitoxin-Pk1a from Phoneutria keyserlingi (Brazilian wandering spider).